Here is a 355-residue protein sequence, read N- to C-terminus: Protein FIP1 (355 aa).

A run of 4 helical transmembrane segments spans residues 42–62, 72–92, 113–133, and 149–169; these read YLYMLLLAGYAILAAGAPWMF, LLCCCDVALLVVTGVFQQYFV, VVRLPFAIAAYGTAAMLLVIV, and IIMLVEAVGAGFFMGLYIGYV. Residues 220–337 are a coiled coil; sequence LHFLSEEILC…RMSNSELQKE (118 aa). Over residues 331-340 the composition is skewed to basic and acidic residues; sequence NSELQKEVAS. The tract at residues 331-355 is disordered; sequence NSELQKEVASTRRKQMLETTTSEQP.

It belongs to the TMEM192 family. In terms of assembly, interacts with FRI.

It localises to the membrane. In Arabidopsis thaliana (Mouse-ear cress), this protein is Protein FIP1.